Here is a 781-residue protein sequence, read N- to C-terminus: Catalase-peroxidase (781 aa).

The first 20 residues, 1 to 20, serve as a signal peptide directing secretion; sequence MLYIYYLFKSLFFHTLFVFS. The tryptophyl-tyrosyl-methioninium (Trp-Tyr) (with M-298) cross-link spans 125 to 272; the sequence is WHSAGTYRIG…LAAVQMGLIY (148 aa). The Proton acceptor role is filled by histidine 126. The tract at residues 237-256 is disordered; it reads VHHPDEHRGAKEKAAKNSDS. The segment at residues 272–298 is a cross-link (tryptophyl-tyrosyl-methioninium (Tyr-Met) (with W-125)); that stretch reads YVNPEGPDGRPDPLASARDIRETFARM. Histidine 313 lines the heme b pocket. Residues 317–336 are disordered; sequence KTHGAAPADNVGPEPEAGEL.

This sequence belongs to the peroxidase family. Peroxidase/catalase subfamily. Homodimer or homotetramer. Heme b serves as cofactor. Post-translationally, formation of the three residue Trp-Tyr-Met cross-link is important for the catalase, but not the peroxidase activity of the enzyme.

It catalyses the reaction H2O2 + AH2 = A + 2 H2O. It carries out the reaction 2 H2O2 = O2 + 2 H2O. Functionally, bifunctional enzyme with both catalase and broad-spectrum peroxidase activity. The polypeptide is Catalase-peroxidase (Xylella fastidiosa (strain 9a5c)).